Here is a 361-residue protein sequence, read N- to C-terminus: Mitochondrial import receptor subunit TOM40 homolog (361 aa).

Residues 1–10 show a composition bias toward low complexity; the sequence is MGNVLAASSP. The interval 1–71 is disordered; sequence MGNVLAASSP…TASASGAAED (71 aa). Residues 11 to 36 are compositionally biased toward pro residues; the sequence is PAGPPPPPAPALVGLPPPPPSPPGFT. Composition is skewed to low complexity over residues 37–52 and 59–71; these read LPPLGGSLGAGTSTSR and GAATASASGAAED.

It belongs to the Tom40 family. Forms part of the preprotein translocase complex of the outer mitochondrial membrane (TOM complex) which consists of at least 7 different proteins (TOMM5, TOMM6, TOMM7, TOMM20, TOMM22, TOMM40 and TOMM70). Interacts with mitochondrial targeting sequences. Interacts with TIMM29; linking the TIM22 complex to the TOM complex. Forms a complex with BCAP31 (via C-terminus) which mediates the translocation of components of the mitochondrial membrane respiratory chain NADH dehydrogenase (Complex I) from the cytosol to the mitochondria. Interacts (via N-terminus) with CYP1A1 (via mitochondrial targeting signal); this interaction is required for CYP1A1 translocation across the mitochondrial outer membrane.

The protein resides in the mitochondrion outer membrane. In terms of biological role, channel-forming protein essential for import of protein precursors into mitochondria. Plays a role in the assembly of the mitochondrial membrane respiratory chain NADH dehydrogenase (Complex I) by forming a complex with BCAP31 and mediating the translocation of Complex I components from the cytosol to the mitochondria. The protein is Mitochondrial import receptor subunit TOM40 homolog (TOMM40) of Homo sapiens (Human).